Here is a 430-residue protein sequence, read N- to C-terminus: Transcriptional regulatory protein RXT2 (430 aa).

Residues 408–430 (EIENTMEDGVVDDNEPDEEANRA) form a disordered region.

Belongs to the RXT2 family. Component of the RPD3C(L) complex composed of at least ASH1, CTI6, DEP1, PHO23, RPD3, RXT2, RXT3, SAP30, SDS3, SIN3, UME1 and UME6.

The protein resides in the nucleus. Functionally, component of the RPD3C(L) histone deacetylase complex (HDAC) responsible for the deacetylation of lysine residues on the N-terminal part of the core histones (H2A, H2B, H3 and H4). Histone deacetylation gives a tag for epigenetic repression and plays an important role in transcriptional regulation, cell cycle progression and developmental events. This chain is Transcriptional regulatory protein RXT2 (RXT2), found in Saccharomyces cerevisiae (strain ATCC 204508 / S288c) (Baker's yeast).